Consider the following 309-residue polypeptide: L-aminoadipate-semialdehyde dehydrogenase-phosphopantetheinyl transferase (309 aa).

CoA is bound by residues arginine 47, 86-91, and 108-111; these read RTAKGK and NISH. The Mg(2+) site is built by aspartate 129 and glutamate 181. CoA is bound at residue 181 to 185; the sequence is ESFIK. Serine 258 carries the phosphoserine modification.

This sequence belongs to the P-Pant transferase superfamily. AcpS family. In terms of assembly, monomer. Mg(2+) is required as a cofactor.

It localises to the cytoplasm. The protein resides in the cytosol. The catalysed reaction is apo-[ACP] + CoA = holo-[ACP] + adenosine 3',5'-bisphosphate + H(+). It carries out the reaction apo-[ACP] + acetyl-CoA = acetyl-[ACP] + adenosine 3',5'-bisphosphate + H(+). In terms of biological role, catalyzes the post-translational modification of target proteins by phosphopantetheine. Can transfer the 4'-phosphopantetheine moiety from coenzyme A, regardless of whether the CoA is presented in the free thiol form or as an acetyl thioester, to a serine residue of a broad range of acceptors including the acyl carrier domain of FASN. The protein is L-aminoadipate-semialdehyde dehydrogenase-phosphopantetheinyl transferase (AASDHPPT) of Pongo abelii (Sumatran orangutan).